We begin with the raw amino-acid sequence, 450 residues long: MTASHSLALSMTKSTSPLILTLTLSLQPPLKHPRKRETFQEIQAYPNAEVISLSPKSLMATNRFFCEICNKGFQREQNLQLHKRGHNLPWKLKQKTNKNQVKKKVYICPEKSCVHHDPARALGDLTGIKKHFSRKHGEKKWKCDKCSKKYAVISDWKAHNKICGSREFRCDCGTLFSRKDSFISHRSFCDVLAEESSKFFSVPSPLAANSTIATVTDTNNPILIQSQLDQSSTGTADLNVNNNHTTLFGQKFTNSNPTQQQPNALALSSPPSPRSTSDSVHNLWKLQEEECAHQWLLNEYMNNNKNIFHKGIFKNQEDEIKKGNIYSGSNPTDGNIASLFSYNQEAVNMASFSATTLLQKVAQTGTPSSSETSTTMFGQMTSSIFNNTMLNSYCLTAKNNEEELTRDFLGVGSSEDQQRLHRHRFPSSVPLTANHDIPKLAATIVGRKQP.

S54 carries the post-translational modification Phosphoserine. 2 consecutive C2H2-type zinc fingers follow at residues 64-86 (FFCE…KRGH) and 106-136 (YICP…SRKH). A Nuclear localization signal motif is present at residues 128-135 (IKKHFSRK). A C2H2-type 2; degenerate zinc finger spans residues 141 to 165 (WKCDKCSKKYAVISDWKAHNKICGS). Zn(2+) is bound by residues C143, C146, H159, C163, C170, C172, H185, and C189. The CCHC-type 2; atypical zinc-finger motif lies at 168–191 (FRCDCGTLFSRKDSFISHRSFCDV). Residues 178-190 (RKDSFISHRSFCD) form an SHR-binding region. Positions 248–263 (FGQKFTNSNPTQQQPN) are enriched in polar residues. A disordered region spans residues 248–280 (FGQKFTNSNPTQQQPNALALSSPPSPRSTSDSV).

Its subcellular location is the nucleus. Its function is as follows. Probable transcription factor. The protein is Protein indeterminate-domain 13 of Arabidopsis thaliana (Mouse-ear cress).